The sequence spans 160 residues: Nucleotide-binding protein VS_1405 (160 aa).

The protein belongs to the YajQ family.

Nucleotide-binding protein. This is Nucleotide-binding protein VS_1405 from Vibrio atlanticus (strain LGP32) (Vibrio splendidus (strain Mel32)).